Reading from the N-terminus, the 325-residue chain is Beta-ketoacyl-[acyl-carrier-protein] synthase III (325 aa).

Catalysis depends on residues Cys-116 and His-252. The segment at Gln-253 to Arg-257 is ACP-binding. Asn-282 is a catalytic residue.

The protein belongs to the thiolase-like superfamily. FabH family. As to quaternary structure, homodimer.

It localises to the cytoplasm. It carries out the reaction malonyl-[ACP] + acetyl-CoA + H(+) = 3-oxobutanoyl-[ACP] + CO2 + CoA. Its pathway is lipid metabolism; fatty acid biosynthesis. Functionally, catalyzes the condensation reaction of fatty acid synthesis by the addition to an acyl acceptor of two carbons from malonyl-ACP. Catalyzes the first condensation reaction which initiates fatty acid synthesis and may therefore play a role in governing the total rate of fatty acid production. Possesses both acetoacetyl-ACP synthase and acetyl transacylase activities. Its substrate specificity determines the biosynthesis of branched-chain and/or straight-chain of fatty acids. This chain is Beta-ketoacyl-[acyl-carrier-protein] synthase III, found in Xanthomonas oryzae pv. oryzae (strain MAFF 311018).